A 500-amino-acid chain; its full sequence is MSDTPFGDADHPRPAPIHPDAVLPPPMSSQSADNDPTEALNEAWTNILTKVSKPNRAWLSNTTPVTMHSSTAMVAVPNEFARDRLESKMRYELEELLSDHFHKAIHLAITIDPDLELALGAPDHEDEEEEVPPAQFVPKVTVGVTEPSARPTTTIDDDEGNRLNPKYTFDSFVIGASNRFAHAAAVAVAEAPGKSYNPLLIYGGSGLGKTHLLHAIGRYVMSYYDNVKVKYVSTEELTNDFINAIGTNRTTEFRRSYRDVDVLLVDDIQFLQSKIQTQEEFFHTFNTLHNAQKQIVMTSDRPPKLLEALEPRLRSRFEWGLLTDIQPPDLETRIAILRRKVAAEKITVEPDVLEFIASRIQTNIRELEGALIRVTAFASLNQQPVDISLAEVVLKDLIPEGRETPVTPERIIAETADYFDISADDLLGTSRAQTLVTARQIAMYLCRELTDLSLPKIGAEFGGKDHTTVMHADRKIRALMGEQRQIFNQVSEITNRIKQY.

Residues 1–37 (MSDTPFGDADHPRPAPIHPDAVLPPPMSSQSADNDPT) form a disordered region. The interval 1–103 (MSDTPFGDAD…EELLSDHFHK (103 aa)) is domain I, interacts with DnaA modulators. Over residues 14–27 (PAPIHPDAVLPPPM) the composition is skewed to pro residues. The interval 103–161 (KAIHLAITIDPDLELALGAPDHEDEEEEVPPAQFVPKVTVGVTEPSARPTTTIDDDEGN) is domain II. The segment at 162–378 (RLNPKYTFDS…GALIRVTAFA (217 aa)) is domain III, AAA+ region. Positions 206, 208, 209, and 210 each coordinate ATP. The domain IV, binds dsDNA stretch occupies residues 379 to 500 (SLNQQPVDIS…SEITNRIKQY (122 aa)).

Belongs to the DnaA family. In terms of assembly, oligomerizes as a right-handed, spiral filament on DNA at oriC.

It is found in the cytoplasm. Its function is as follows. Plays an essential role in the initiation and regulation of chromosomal replication. ATP-DnaA binds to the origin of replication (oriC) to initiate formation of the DNA replication initiation complex once per cell cycle. Binds the DnaA box (a 9 base pair repeat at the origin) and separates the double-stranded (ds)DNA. Forms a right-handed helical filament on oriC DNA; dsDNA binds to the exterior of the filament while single-stranded (ss)DNA is stabiized in the filament's interior. The ATP-DnaA-oriC complex binds and stabilizes one strand of the AT-rich DNA unwinding element (DUE), permitting loading of DNA polymerase. After initiation quickly degrades to an ADP-DnaA complex that is not apt for DNA replication. Binds acidic phospholipids. This is Chromosomal replication initiator protein DnaA from Cutibacterium acnes (strain DSM 16379 / KPA171202) (Propionibacterium acnes).